Reading from the N-terminus, the 130-residue chain is Small ribosomal subunit protein uS11 (130 aa).

Belongs to the universal ribosomal protein uS11 family. As to quaternary structure, part of the 30S ribosomal subunit. Interacts with proteins S7 and S18. Binds to IF-3.

Its function is as follows. Located on the platform of the 30S subunit, it bridges several disparate RNA helices of the 16S rRNA. Forms part of the Shine-Dalgarno cleft in the 70S ribosome. In Lactobacillus helveticus (strain DPC 4571), this protein is Small ribosomal subunit protein uS11.